The primary structure comprises 547 residues: Glucose-6-phosphate isomerase (547 aa).

E351 (proton donor) is an active-site residue. Active-site residues include H382 and K510.

This sequence belongs to the GPI family.

The protein resides in the cytoplasm. The enzyme catalyses alpha-D-glucose 6-phosphate = beta-D-fructose 6-phosphate. Its pathway is carbohydrate biosynthesis; gluconeogenesis. It functions in the pathway carbohydrate degradation; glycolysis; D-glyceraldehyde 3-phosphate and glycerone phosphate from D-glucose: step 2/4. Functionally, catalyzes the reversible isomerization of glucose-6-phosphate to fructose-6-phosphate. The sequence is that of Glucose-6-phosphate isomerase from Beijerinckia indica subsp. indica (strain ATCC 9039 / DSM 1715 / NCIMB 8712).